The sequence spans 145 residues: Basic phospholipase A2 S6-45 (145 aa).

The N-terminal stretch at 1–19 (MYPAHLLVLLAVCVSLLGA) is a signal peptide. Positions 20 to 27 (SDIPPQPL) are excised as a propeptide. Cystine bridges form between cysteine 38-cysteine 99, cysteine 54-cysteine 144, cysteine 56-cysteine 72, cysteine 71-cysteine 127, cysteine 78-cysteine 120, cysteine 88-cysteine 113, and cysteine 106-cysteine 118. Positions 55, 57, and 59 each coordinate Ca(2+). Histidine 75 is a catalytic residue. Aspartate 76 is a Ca(2+) binding site. Aspartate 121 is an active-site residue.

The protein belongs to the phospholipase A2 family. Group I subfamily. D49 sub-subfamily. The cofactor is Ca(2+). Expressed by the venom gland.

Its subcellular location is the secreted. The enzyme catalyses a 1,2-diacyl-sn-glycero-3-phosphocholine + H2O = a 1-acyl-sn-glycero-3-phosphocholine + a fatty acid + H(+). Its function is as follows. Snake venom phospholipase A2 (PLA2) that inhibits collagen-induced platelet aggregation. PLA2 catalyzes the calcium-dependent hydrolysis of the 2-acyl groups in 3-sn-phosphoglycerides. The protein is Basic phospholipase A2 S6-45 of Austrelaps superbus (Lowland copperhead snake).